A 316-amino-acid chain; its full sequence is MTRHLLTAADLSRDEATAILDDADRFSQALLGREVKKLPTLRGRTVITMFYENSTRTRVSFEVAGKWMSADVINVSASGSSVAKGESLRDTALTLRAAGADALIIRHPASGAAQQLAEWTAAEAGAPSVINAGDGTHEHPTQALLDALTLRQRLGGIEGRRVVIVGDVLHSRVARSNVLLLHTLGAEVVLVAPPTLLPVGVRQWPVTVSHDLDAELPAADAVLMLRVQAERMNGGFFPSAREYSVRYGLSDKRQALLPDSAVVLHPGPMLRGMEISSSVADSSQSAVLQQVSNGVHVRMAVLFHLLVGAEQEAISA.

Positions 56 and 57 each coordinate carbamoyl phosphate. Lys-84 contacts L-aspartate. 3 residues coordinate carbamoyl phosphate: Arg-106, His-139, and Gln-142. L-aspartate is bound by residues Arg-172 and Arg-226. Residues Gly-267 and Pro-268 each coordinate carbamoyl phosphate.

Belongs to the aspartate/ornithine carbamoyltransferase superfamily. ATCase family. Heterododecamer (2C3:3R2) of six catalytic PyrB chains organized as two trimers (C3), and six regulatory PyrI chains organized as three dimers (R2).

It catalyses the reaction carbamoyl phosphate + L-aspartate = N-carbamoyl-L-aspartate + phosphate + H(+). Its pathway is pyrimidine metabolism; UMP biosynthesis via de novo pathway; (S)-dihydroorotate from bicarbonate: step 2/3. Catalyzes the condensation of carbamoyl phosphate and aspartate to form carbamoyl aspartate and inorganic phosphate, the committed step in the de novo pyrimidine nucleotide biosynthesis pathway. The chain is Aspartate carbamoyltransferase catalytic subunit from Mycobacterium sp. (strain JLS).